Here is a 384-residue protein sequence, read N- to C-terminus: Formate-dependent phosphoribosylglycinamide formyltransferase (384 aa).

N(1)-(5-phospho-beta-D-ribosyl)glycinamide contacts are provided by residues 14–15 and Glu-74; that span reads EL. ATP contacts are provided by residues Arg-106, Lys-147, 152–157, 187–190, and Glu-195; these read SSGKGQ and EEFI. In terms of domain architecture, ATP-grasp spans 111-300; the sequence is RLAAETLGLA…EFALHVRAIL (190 aa). 2 residues coordinate Mg(2+): Glu-259 and Glu-271. Residues Asp-278, Lys-348, and 355–356 each bind N(1)-(5-phospho-beta-D-ribosyl)glycinamide; that span reads RR.

It belongs to the PurK/PurT family. Homodimer.

The catalysed reaction is N(1)-(5-phospho-beta-D-ribosyl)glycinamide + formate + ATP = N(2)-formyl-N(1)-(5-phospho-beta-D-ribosyl)glycinamide + ADP + phosphate + H(+). It functions in the pathway purine metabolism; IMP biosynthesis via de novo pathway; N(2)-formyl-N(1)-(5-phospho-D-ribosyl)glycinamide from N(1)-(5-phospho-D-ribosyl)glycinamide (formate route): step 1/1. Its function is as follows. Catalyzes two reactions: the first one is the production of beta-formyl glycinamide ribonucleotide (GAR) from formate, ATP and beta GAR; the second, a side reaction, is the production of acetyl phosphate and ADP from acetate and ATP. Involved in the de novo purine biosynthesis. Catalyzes the transfer of formate to 5-phospho-ribosyl-glycinamide (GAR), producing 5-phospho-ribosyl-N-formylglycinamide (FGAR). Formate is provided by PurU via hydrolysis of 10-formyl-tetrahydrofolate. This Bacillus subtilis (strain 168) protein is Formate-dependent phosphoribosylglycinamide formyltransferase.